Here is a 416-residue protein sequence, read N- to C-terminus: MSTPLQGIKVLDFTGVQSGPSCTQMLAWFGADVIKIERPSVGDVTRHQLRDIPDIDALYFTMLNSNKRSIELNTKTAEGKEVMEKLIREADILVENFHPGAIDHMGFTWEHIQEINPRLIFGSIKGFDECSPYVNVKAYENVAQAAGGAASTTGFWDGPPLVSAAALGDSNTGMHLLIGLLAALLHREKTGRGQRVTMSMQDAVLNLCRVKLRDQQRLDKLGYLEEYPQYPNGTFGDAVPRGGNAGGGGQPGWILKCKGWETDPNAYIYFTIQEQNWENTCKAIGKPEWITDPAYSTAHARQPHIFDIFAEIEKYTVTIDKHEAVAYLTQFDIPCAPVLSMKEISLDPSLRQSGSVVEVEQPLRGKYLTVGCPMKFSAFTPDIKAAPLLGEHTAAVLQELGYSDDEIAAMKQNHAI.

CoA is bound by residues 17–18, R38, 72–75, 96–98, H104, and 137–140; these read QS, LNTK, NFH, and KAYE. The active-site Nucleophile is the D169. Position 248-250 (248-250) interacts with substrate; sequence GGQ. 273 to 275 contacts CoA; it reads QEQ.

This sequence belongs to the CoA-transferase III family. Frc subfamily. Homodimer.

It catalyses the reaction formyl-CoA + oxalate = oxalyl-CoA + formate. Its pathway is metabolic intermediate degradation; oxalate degradation; CO(2) and formate from oxalate: step 1/2. Its function is as follows. Involved in the catabolism of oxalate and in the adapatation to low pH via the induction of the oxalate-dependent acid tolerance response (ATR). Catalyzes the transfer of the CoA moiety from formyl-CoA to oxalate. This Escherichia coli O6:H1 (strain CFT073 / ATCC 700928 / UPEC) protein is Formyl-CoA:oxalate CoA-transferase.